We begin with the raw amino-acid sequence, 346 residues long: PPE family protein PPE17 (346 aa).

The interval 6-159 (FPPEFNSLNI…LYATMAAAAA (154 aa)) is PPE.

It belongs to the mycobacterial PPE family. Interacts with LRR motifs 15-20 of host Toll-like receptor 2 (TLR2).

It is found in the secreted. The protein resides in the cell wall. The protein localises to the cell surface. Its function is as follows. Induces pro-inflammatory responses. Induces host TLR1/2 heterodimerization, which causes an increased recruitment of IRAK1, MYD88, and protein kinase C epsilon (PRKCE) to the downstream TLR-signaling complex that translocates PRKCE into the nucleus in an IRAK1-dependent manner. PRKCE-mediated phosphorylation allowed the nuclear IRAK3 to be exported to the cytoplasm, leading to increased activation of ERK1/2, stabilization of MAPK phosphatase 1 (MKP1), and induction of TNF-alpha with concomitant down-regulation of MAP kinase p38. In terms of biological role, during M.tuberculosis and HIV-1 co-infection, can stimulate transcription from the long terminal repeat (LTR) of HIV-1 in monocyte/macrophage cells. Interaction with human TLR2 activates the NF-kappa-B transcription factor, which binds to the promoter region of the HIV-1 and induces HIV-1 gene expression. The sequence is that of PPE family protein PPE17 (PPE17) from Mycobacterium tuberculosis (strain ATCC 25618 / H37Rv).